The sequence spans 21 residues: Alpha-aminoadipic semialdehyde dehydrogenase (21 aa).

This sequence belongs to the aldehyde dehydrogenase family. In terms of assembly, homotetramer.

The enzyme catalyses (S)-2-amino-6-oxohexanoate + NADP(+) + H2O = L-2-aminoadipate + NADPH + 2 H(+). It catalyses the reaction (S)-2-amino-6-oxohexanoate + NAD(+) + H2O = L-2-aminoadipate + NADH + 2 H(+). The polypeptide is Alpha-aminoadipic semialdehyde dehydrogenase (aldh7a1) (Ctenopharyngodon idella (Grass carp)).